We begin with the raw amino-acid sequence, 525 residues long: Histidine-rich glycoprotein (525 aa).

A signal peptide spans 1–18; it reads MKVLTTALLLVTLQCSHA. Positions 19 to 122 constitute a Cystatin 1 domain; it reads LSPTNCDASE…ESQDLSVNGY (104 aa). 5 cysteine pairs are disulfide-bonded: cysteine 24/cysteine 504, cysteine 78/cysteine 89, cysteine 103/cysteine 124, cysteine 201/cysteine 414, and cysteine 216/cysteine 239. Residues 41 to 84 form an interaction with ATP5F1A region; the sequence is GRRSGYVFELLRVSDAHLDRAGTATVYYLALDVIESDCWVLSTK. 3 N-linked (GlcNAc...) asparagine glycosylation sites follow: asparagine 112, asparagine 123, and asparagine 200. The 106-residue stretch at 135-240 folds into the Cystatin 2 domain; that stretch reads NTKDSPVLLD…TPDSIDINCE (106 aa). Positions 273–447 are disordered; that stretch reads GSRDHHHTHK…SRKRGPGKGL (175 aa). Positions 293 to 303 are enriched in basic and acidic residues; that stretch reads EGKDNSDRPRL. Asparagine 322 and asparagine 330 each carry an N-linked (GlcNAc...) asparagine glycan. Residues 339 to 404 show a composition bias toward basic residues; that stretch reads HGHRPHGHHP…GHHPHGHHPH (66 aa). A necessary for endothelial cell focal adhesions and anti-angiogenic activities region spans residues 345-379; sequence GHHPHSHHPPGHHSHGHHPHGHHPHSHHSHGHHPP. Position 438 is a phosphoserine (serine 438).

Interacts with THBS1 (via the TSP type I repeats); the interaction blocks the antiangiogenic effect of THBS1 with CD36. Interacts with HPSE; the interaction is enhanced at acidic pH, partially inhibits binding of HPSE to cell surface receptors and modulates its enzymatic activity. Interacts (via the HRR domain) with TMP1; the interaction partially mediates the antiangiogenic properties of HRG. Interacts with kappa and lambda light chains of IgG molecules. Interacts with ATP5F1A; the interaction occurs on the surface of T-cells and alters their cell morphology in concert with CONA. Binds IgG molecules containing kappa and lambda light chains and inhibits the formation of insoluble immunoglobulin complexes. Interacts with F12; the interaction, which is enhanced in the presence of zinc ions and inhibited by heparin-binding to HRG, inhibits factor XII autoactivation and contact-initiated coagulation. Interacts with PLG (via its Kringle domains); the interaction tethers PLG to the cell surface and enhances its activation. Interacts (via the HRR domain) with TPM1; the interaction appears to contribute to the antiangiogenic properties of the HRR domain. Interacts with THBS2; the interaction blocks the antiangiogenic effect of THBS2 with CD36. The cofactor is Zn(2+). In terms of processing, proteolytic cleavage produces several HRG fragments which are mostly disulfide-linked and, therefore, not released. Cleavage by plasmin is inhibited in the presence of heparin, zinc ions or in an acidic environment. Cleavage reduces binding of HRG to heparan sulfate, but enhances the ability of HRG to bind and tether plasminogen to the cell surface. On platelet activation, releases a 33 kDa antiangiogenic peptide which encompasses the HRR. Also cleaved in the C-terminal by plasmin. N-glycosylated. Expressed in liver, blood plasma, serum and in platelets. Also present in fibrin clots, wound fluid from acute wounds and chronic leg ulcers.

The protein localises to the secreted. Its function is as follows. Plasma glycoprotein that binds a number of ligands such as heme, heparin, heparan sulfate, thrombospondin, plasminogen, and divalent metal ions. Binds heparin and heparin/glycosaminoglycans in a zinc-dependent manner. Binds heparan sulfate on the surface of liver, lung, kidney and heart endothelial cells. Binds to N-sulfated polysaccharide chains on the surface of liver endothelial cells. Inhibits rosette formation. Acts as an adapter protein and is implicated in regulating many processes such as immune complex and pathogen clearance, cell chemotaxis, cell adhesion, angiogenesis, coagulation and fibrinolysis. Mediates clearance of necrotic cells through enhancing the phagocytosis of necrotic cells in a heparan sulfate-dependent pathway. This process can be regulated by the presence of certain HRG ligands such as heparin and zinc ions. Binds to IgG subclasses of immunoglobins containing kappa and lambda light chains with different affinities regulating their clearance and inhibiting the formation of insoluble immune complexes. Tethers plasminogen to the cell surface. Binds T-cells and alters the cell morphology. Acts as a regulator of the vascular endothelial growth factor (VEGF) signaling pathway; inhibits endothelial cell motility by reducing VEGF-induced complex formation between PXN/paxillin and ILK/integrin-linked protein kinase and by promoting inhibition of VEGF-induced tyrosine phosphorylation of focal adhesion kinases and alpha-actinins in endothelial cells. Also plays a role in the regulation of tumor angiogenesis and tumor immune surveillance. Normalizes tumor vessels and promotes antitumor immunity by polarizing tumor-associated macrophages, leading to decreased tumor growth and metastasis. Modulates angiogenesis by blocking the CD6-mediated antiangiongenic effect of thrombospondins, THBS1 and THBS2. This chain is Histidine-rich glycoprotein (Hrg), found in Mus musculus (Mouse).